Consider the following 112-residue polypeptide: Large ribosomal subunit protein mL53 (112 aa).

It belongs to the mitochondrion-specific ribosomal protein mL53 family. Component of the mitochondrial ribosome large subunit (39S) which comprises a 16S rRNA and about 50 distinct proteins.

It localises to the mitochondrion. This Pongo abelii (Sumatran orangutan) protein is Large ribosomal subunit protein mL53 (MRPL53).